The primary structure comprises 296 residues: Tuberculosinyl adenosine transferase (296 aa).

The protein belongs to the diterpene synthase family. Homodimer. Mg(2+) is required as a cofactor.

The catalysed reaction is tuberculosinyl diphosphate + adenosine + H(+) = 1-tuberculosinyladenosine + diphosphate. The enzyme catalyses tuberculosinyl diphosphate + H2O = tuberculosinol + diphosphate. It carries out the reaction tuberculosinyl diphosphate + H2O = (13R)-edaxadiene + diphosphate. It catalyses the reaction tuberculosinyl diphosphate + H2O = (13S)-edaxadiene + diphosphate. Its function is as follows. Tuberculosinyl transferase that catalyzes the condensation of adenosine and tuberculosinyl diphosphate (TbPP) to generate 1-tuberculosinyladenosine (1-TbAd), which acts as an antiacid that directly protects M.tuberculosis from acid pH and physically remodels M.tuberculosis phagolysosomes. In addition, acts as a phosphatase that catalyzes the diphosphate-removal from TbPP to produce both tuberculosinol (TOH) and isotuberculosinol (iso-TOH). In Mycobacterium tuberculosis (strain CDC 1551 / Oshkosh), this protein is Tuberculosinyl adenosine transferase.